A 454-amino-acid polypeptide reads, in one-letter code: Nuclear distribution protein PAC1-1 (454 aa).

Residues 9-41 (QAEELHRALIAYLSSNNLTSTAAALRAEIGLGE) form the LisH domain. Residues 71–93 (RHTSQLSNATPTSRQNKDPVNWL) are disordered. Residues 73–84 (TSQLSNATPTSR) show a composition bias toward polar residues. WD repeat units follow at residues 104–145 (SHRQ…RTIK), 147–187 (HTKT…KNIR), 191–236 (GHDH…CVKT), 239–278 (GHAE…PEPK), 283–342 (GHEH…IKIL), 344–383 (GHDN…RCVK), and 388–450 (AHAH…LNVR).

Belongs to the WD repeat LIS1/nudF family. As to quaternary structure, self-associates. Interacts with NDL1 and dynein.

The protein localises to the cytoplasm. It localises to the cytoskeleton. It is found in the spindle pole. Its function is as follows. Positively regulates the activity of the minus-end directed microtubule motor protein dynein. May enhance dynein-mediated microtubule sliding by targeting dynein to the microtubule plus end. Required for nuclear migration during vegetative growth as well as development. Required for retrograde early endosome (EE) transport from the hyphal tip. Required for localization of dynein to the mitotic spindle poles. Recruits additional proteins to the dynein complex at SPBs. The chain is Nuclear distribution protein PAC1-1 from Chaetomium globosum (strain ATCC 6205 / CBS 148.51 / DSM 1962 / NBRC 6347 / NRRL 1970) (Soil fungus).